We begin with the raw amino-acid sequence, 460 residues long: Ribulose bisphosphate carboxylase large chain (460 aa).

The residue at position 4 (Lys4) is an N6,N6,N6-trimethyllysine. Substrate-binding residues include Asn113 and Thr163. The active-site Proton acceptor is the Lys165. Lys167 is a binding site for substrate. Mg(2+) is bound by residues Lys191, Asp193, and Glu194. Lys191 bears the N6-carboxylysine mark. His284 (proton acceptor) is an active-site residue. The substrate site is built by Arg285, His317, and Ser369.

Belongs to the RuBisCO large chain family. Type I subfamily. Heterohexadecamer of 8 large chains and 8 small chains. It depends on Mg(2+) as a cofactor.

It is found in the plastid. The protein resides in the chloroplast. The enzyme catalyses 2 (2R)-3-phosphoglycerate + 2 H(+) = D-ribulose 1,5-bisphosphate + CO2 + H2O. The catalysed reaction is D-ribulose 1,5-bisphosphate + O2 = 2-phosphoglycolate + (2R)-3-phosphoglycerate + 2 H(+). RuBisCO catalyzes two reactions: the carboxylation of D-ribulose 1,5-bisphosphate, the primary event in carbon dioxide fixation, as well as the oxidative fragmentation of the pentose substrate in the photorespiration process. Both reactions occur simultaneously and in competition at the same active site. The protein is Ribulose bisphosphate carboxylase large chain of Cunninghamia lanceolata (China fir).